The primary structure comprises 331 residues: tRNA-cytidine(32) 2-sulfurtransferase (331 aa).

Residues Met-1–Arg-31 form a disordered region. Residues Asp-8–Ala-23 show a composition bias toward low complexity. The short motif at Ser-71–Ser-76 is the PP-loop motif element. Residues Cys-146, Cys-149, and Cys-237 each contribute to the [4Fe-4S] cluster site.

Belongs to the TtcA family. In terms of assembly, homodimer. The cofactor is Mg(2+). [4Fe-4S] cluster is required as a cofactor.

The protein resides in the cytoplasm. The catalysed reaction is cytidine(32) in tRNA + S-sulfanyl-L-cysteinyl-[cysteine desulfurase] + AH2 + ATP = 2-thiocytidine(32) in tRNA + L-cysteinyl-[cysteine desulfurase] + A + AMP + diphosphate + H(+). The protein operates within tRNA modification. Catalyzes the ATP-dependent 2-thiolation of cytidine in position 32 of tRNA, to form 2-thiocytidine (s(2)C32). The sulfur atoms are provided by the cysteine/cysteine desulfurase (IscS) system. The protein is tRNA-cytidine(32) 2-sulfurtransferase of Burkholderia lata (strain ATCC 17760 / DSM 23089 / LMG 22485 / NCIMB 9086 / R18194 / 383).